The sequence spans 254 residues: MNSFSTLKTLFCGSLLALSLVNTTQAGVSLDRTRIVLTGNENSASVNLKNTSPDIPFLAQSWVENENGQKISSPLVALPPLQRLDGAQKGVVRITKTAEVGLLPQDRESLFYLNVREIPPAPKQANVLQMAMQSRIKLFYRPSAIVPEKPGMVWQDQLVFKKQGNKFIVNNPTPYYITIISLSNKLNGEDSDKLTTFPGLMVAPKASLDIPVKTSNVNQFYMMYVNDYGGHPELKFVCQQDSCKVAPKDQQPKY.

The first 26 residues, 1 to 26 (MNSFSTLKTLFCGSLLALSLVNTTQA), serve as a signal peptide directing secretion.

Belongs to the periplasmic pilus chaperone family.

The protein resides in the periplasm. In terms of biological role, involved in the biogenesis of the PMF fimbria. This is Chaperone protein PmfD (pmfD) from Proteus mirabilis (strain HI4320).